Reading from the N-terminus, the 138-residue chain is Large ribosomal subunit protein bL17 (138 aa).

It belongs to the bacterial ribosomal protein bL17 family. Part of the 50S ribosomal subunit. Contacts protein L32.

The polypeptide is Large ribosomal subunit protein bL17 (Dinoroseobacter shibae (strain DSM 16493 / NCIMB 14021 / DFL 12)).